Reading from the N-terminus, the 183-residue chain is Archaemetzincin (183 aa).

H131 lines the Zn(2+) pocket. The Proton acceptor role is filled by E132. Positions 135, 141, 142, 147, 166, and 169 each coordinate Zn(2+).

This sequence belongs to the peptidase M54 family. In terms of assembly, monomer. Zn(2+) serves as cofactor.

Functionally, probable zinc metalloprotease whose natural substrate is unknown. The sequence is that of Archaemetzincin from Saccharolobus islandicus (strain Y.N.15.51 / Yellowstone #2) (Sulfolobus islandicus).